A 374-amino-acid polypeptide reads, in one-letter code: 4-hydroxybenzoate polyprenyltransferase, mitochondrial (374 aa).

Residues 1–63 (MLRLGGAGLV…RALSLSAAAV (63 aa)) constitute a mitochondrion transit peptide. Residues 64–83 (VNSAPRPLQPYLRLMRLDKP) are Mitochondrial matrix-facing. A helical transmembrane segment spans residues 84-104 (IGTWLLYLPCTWSIGLAADPG). Residues 105–108 (CFPD) lie on the Mitochondrial intermembrane side of the membrane. The chain crosses the membrane as a helical span at residues 109–129 (WYMLSLFGTGAILMRGAGCTI). At 130–153 (NDMWDRDFDKKVERTANRPIAAGD) the chain is on the mitochondrial matrix side. A helical transmembrane segment spans residues 154–174 (ISAFQSFVFLGAQLTLALGVL). Over 175–176 (LH) the chain is Mitochondrial intermembrane. Residues 177 to 197 (LNYYSIAMGAASLLLVVTYPL) form a helical membrane-spanning segment. At 198 to 200 (MKR) the chain is on the mitochondrial matrix side. The chain crosses the membrane as a helical span at residues 201-221 (VTFWPQLALGLTFNWGALLGW). The Mitochondrial intermembrane segment spans residues 222 to 230 (SAVKGSCDP). The helical transmembrane segment at 231–251 (AVCLPLYFSGVMWTLIYDTIY) threads the bilayer. At 252–277 (AHQDKKDDALIGLKSTALLFRENTKQ) the chain is on the mitochondrial matrix side. The chain crosses the membrane as a helical span at residues 278-298 (WLSGFGVAMVGALSLVGASSG). Topologically, residues 299-300 (QT) are mitochondrial intermembrane. A helical transmembrane segment spans residues 301 to 321 (LPYYAAVAAVGAHLAHQIYTV). The Mitochondrial matrix portion of the chain corresponds to 322-332 (DIHRAEDCWEK). A helical membrane pass occupies residues 333-353 (FTSNRTVGLLLFLGIVLGNLY). Residues 354–374 (KDKPDETKGVDAVGEESERTS) lie on the Mitochondrial intermembrane side of the membrane.

The protein belongs to the UbiA prenyltransferase family. Mg(2+) is required as a cofactor.

The protein resides in the mitochondrion inner membrane. It catalyses the reaction an all-trans-polyprenyl diphosphate + 4-hydroxybenzoate = a 4-hydroxy-3-(all-trans-polyprenyl)benzoate + diphosphate. It carries out the reaction all-trans-decaprenyl diphosphate + 4-hydroxybenzoate = 4-hydroxy-3-(all-trans-decaprenyl)benzoate + diphosphate. The enzyme catalyses all-trans-nonaprenyl diphosphate + 4-hydroxybenzoate = 4-hydroxy-3-(all-trans-nonaprenyl)benzoate + diphosphate. It participates in cofactor biosynthesis; ubiquinone biosynthesis. Its function is as follows. Mediates the second step in the final reaction sequence of coenzyme Q (CoQ) biosynthesis. Catalyzes the prenylation of para-hydroxybenzoate (PHB) with an all-trans polyprenyl group (such as all-trans-nonaprenyl diphosphate). The length of the polyprenyl side chain varies depending on the species, in humans, the side chain is comprised of 10 isoprenyls producing CoQ10 (also known as ubiquinone), whereas rodents predominantly generate CoQ9. However, this specificity is not complete, human tissues have low amounts of CoQ9 and rodent organs contain some CoQ10. Plays a central role in the biosynthesis of CoQ9. CoQ9 is a vital molecule that transports electrons from mitochondrial respiratory chain complexes. CoQs also function as cofactors for uncoupling protein and plays a role as regulator of the extracellularly-induced ceramide-dependent apoptotic pathway. Regulates mitochondrial permeability transition pore (mPTP) opening and ROS production (pivotal events in cell death) in a tissue specific manner. The polypeptide is 4-hydroxybenzoate polyprenyltransferase, mitochondrial (Rattus norvegicus (Rat)).